The sequence spans 77 residues: Acyl carrier protein (77 aa).

Positions methionine 1–glutamine 76 constitute a Carrier domain. At serine 36 the chain carries O-(pantetheine 4'-phosphoryl)serine.

It belongs to the acyl carrier protein (ACP) family. In terms of processing, 4'-phosphopantetheine is transferred from CoA to a specific serine of apo-ACP by AcpS. This modification is essential for activity because fatty acids are bound in thioester linkage to the sulfhydryl of the prosthetic group.

Its subcellular location is the cytoplasm. It participates in lipid metabolism; fatty acid biosynthesis. Its function is as follows. Carrier of the growing fatty acid chain in fatty acid biosynthesis. The polypeptide is Acyl carrier protein (Sulfurihydrogenibium sp. (strain YO3AOP1)).